Reading from the N-terminus, the 162-residue chain is Peptide deformylase-like (162 aa).

Belongs to the polypeptide deformylase family.

This chain is Peptide deformylase-like, found in Staphylococcus aureus (strain MRSA252).